We begin with the raw amino-acid sequence, 288 residues long: Glutamate racemase (288 aa).

Residues 10–11 and 42–43 contribute to the substrate site; these read DS and YG. The active-site Proton donor/acceptor is C73. 74-75 lines the substrate pocket; the sequence is NT. The active-site Proton donor/acceptor is the C184. 185-186 lines the substrate pocket; that stretch reads TH.

Belongs to the aspartate/glutamate racemases family.

The enzyme catalyses L-glutamate = D-glutamate. It functions in the pathway cell wall biogenesis; peptidoglycan biosynthesis. Functionally, provides the (R)-glutamate required for cell wall biosynthesis. The polypeptide is Glutamate racemase (Corynebacterium kroppenstedtii (strain DSM 44385 / JCM 11950 / CIP 105744 / CCUG 35717)).